The following is a 681-amino-acid chain: Peroxisomal acyl-coenzyme A oxidase 2 (681 aa).

Ser-9 is subject to Phosphoserine. Residues Lys-66, Lys-137, Lys-453, Lys-561, and Lys-667 each carry the N6-succinyllysine modification. The short motif at 679–681 (SNL) is the Microbody targeting signal element.

Belongs to the acyl-CoA oxidase family. As to quaternary structure, homodimer. FAD is required as a cofactor. Liver and kidney.

The protein localises to the peroxisome. The enzyme catalyses (25R)-3alpha,7alpha,12alpha-trihydroxy-5beta-cholestan-26-oyl-CoA + A + H2O = (24R,25R)-3alpha,7alpha,12alpha,24-tetrahydroxy-5beta-cholestan-26-oyl-CoA + AH2. It carries out the reaction (25S)-3alpha,7alpha,12alpha-trihydroxy-5beta-cholestan-26-oyl-CoA + O2 = (24E)-3alpha,7alpha,12alpha-trihydroxy-5beta-cholest-24-en-26-oyl-CoA + H2O2. Oxidizes the CoA esters of the bile acid intermediates di- and tri-hydroxycholestanoic acids. Capable of oxidizing short as well as long chain 2-methyl branched fatty acids. The chain is Peroxisomal acyl-coenzyme A oxidase 2 from Oryctolagus cuniculus (Rabbit).